Consider the following 208-residue polypeptide: Protein-L-isoaspartate O-methyltransferase (208 aa).

The active site involves Ser-59.

It belongs to the methyltransferase superfamily. L-isoaspartyl/D-aspartyl protein methyltransferase family.

It localises to the cytoplasm. It catalyses the reaction [protein]-L-isoaspartate + S-adenosyl-L-methionine = [protein]-L-isoaspartate alpha-methyl ester + S-adenosyl-L-homocysteine. Catalyzes the methyl esterification of L-isoaspartyl residues in peptides and proteins that result from spontaneous decomposition of normal L-aspartyl and L-asparaginyl residues. It plays a role in the repair and/or degradation of damaged proteins. This Salmonella newport (strain SL254) protein is Protein-L-isoaspartate O-methyltransferase.